The sequence spans 147 residues: uncharacterized protein (147 aa).

The interval 1-37 (MVALFKSSLGRPEQHQTPQIRISPASSNVEHSEKQPR) is disordered. Polar residues predominate over residues 15–29 (HQTPQIRISPASSNV). Residues 71-147 (PIPVTKEELA…LKTSFVGFLV (77 aa)) form the Cytochrome b5 heme-binding domain. Heme is bound by residues histidine 106 and histidine 129.

This sequence belongs to the cytochrome b5 family.

This is an uncharacterized protein from Schizosaccharomyces pombe (strain 972 / ATCC 24843) (Fission yeast).